A 572-amino-acid chain; its full sequence is Sulfite reductase [NADPH] hemoprotein beta-component (572 aa).

4 residues coordinate [4Fe-4S] cluster: cysteine 436, cysteine 442, cysteine 481, and cysteine 485. Cysteine 485 is a siroheme binding site.

Belongs to the nitrite and sulfite reductase 4Fe-4S domain family. In terms of assembly, alpha(8)-beta(8). The alpha component is a flavoprotein, the beta component is a hemoprotein. It depends on siroheme as a cofactor. [4Fe-4S] cluster serves as cofactor.

It carries out the reaction hydrogen sulfide + 3 NADP(+) + 3 H2O = sulfite + 3 NADPH + 4 H(+). Its pathway is sulfur metabolism; hydrogen sulfide biosynthesis; hydrogen sulfide from sulfite (NADPH route): step 1/1. Its function is as follows. Component of the sulfite reductase complex that catalyzes the 6-electron reduction of sulfite to sulfide. This is one of several activities required for the biosynthesis of L-cysteine from sulfate. The chain is Sulfite reductase [NADPH] hemoprotein beta-component from Bacillus pumilus (strain SAFR-032).